The chain runs to 297 residues: Phosphoribosylaminoimidazole-succinocarboxamide synthase (297 aa).

The protein belongs to the SAICAR synthetase family.

The catalysed reaction is 5-amino-1-(5-phospho-D-ribosyl)imidazole-4-carboxylate + L-aspartate + ATP = (2S)-2-[5-amino-1-(5-phospho-beta-D-ribosyl)imidazole-4-carboxamido]succinate + ADP + phosphate + 2 H(+). The protein operates within purine metabolism; IMP biosynthesis via de novo pathway; 5-amino-1-(5-phospho-D-ribosyl)imidazole-4-carboxamide from 5-amino-1-(5-phospho-D-ribosyl)imidazole-4-carboxylate: step 1/2. This is Phosphoribosylaminoimidazole-succinocarboxamide synthase from Mycobacterium sp. (strain KMS).